Reading from the N-terminus, the 197-residue chain is Ribonuclease HII (197 aa).

The RNase H type-2 domain occupies 10–197; it reads ELIAGVDEVG…APVRKLLNTL (188 aa). Asp-16, Glu-17, and Asp-108 together coordinate a divalent metal cation.

The protein belongs to the RNase HII family. Requires Mn(2+) as cofactor. The cofactor is Mg(2+).

The protein localises to the cytoplasm. It catalyses the reaction Endonucleolytic cleavage to 5'-phosphomonoester.. Its function is as follows. Endonuclease that specifically degrades the RNA of RNA-DNA hybrids. The polypeptide is Ribonuclease HII (rnhB) (Pasteurella multocida (strain Pm70)).